The chain runs to 241 residues: ATP synthase subunit a (241 aa).

Helical transmembrane passes span 30–50, 91–111, 128–148, 193–213, and 214–234; these read GQVFMTSWILIGALLTLVVVG, FIGTLFLFIFVSNWGGALIPW, INTTVALALLVSLSYFYAGLS, LVVAVLVFLVPLVLPVPVMFL, and GLFTSAIQALIFATLAAYYIG.

The protein belongs to the ATPase A chain family. F-type ATPases have 2 components, CF(1) - the catalytic core - and CF(0) - the membrane proton channel. CF(1) has five subunits: alpha(3), beta(3), gamma(1), delta(1), epsilon(1). CF(0) has four main subunits: a, b, b' and c.

The protein localises to the cellular thylakoid membrane. In terms of biological role, key component of the proton channel; it plays a direct role in the translocation of protons across the membrane. The protein is ATP synthase subunit a of Prochlorococcus marinus (strain SARG / CCMP1375 / SS120).